Consider the following 2550-residue polypeptide: Highly reducing polyketide synthase otaA (2550 aa).

Residues 9–431 enclose the Ketosynthase family 3 (KS3) domain; sequence SEPLAIIGLA…GTNAHAVVED (423 aa). Active-site for beta-ketoacyl synthase activity residues include Cys182, His317, and His355. Residues 572-894 form a malonyl-CoA:ACP transacylase (MAT) domain region; sequence FVFTGQGANW…KRYETNGSTI (323 aa). Positions 959–1094 are N-terminal hotdog fold; it reads HELLGVPVED…GSVRAETGPP (136 aa). The interval 959–1252 is dehydratase (DH) domain; that stretch reads HELLGVPVED…DLVQLPANND (294 aa). One can recognise a PKS/mFAS DH domain in the interval 959–1253; it reads HELLGVPVED…LVQLPANNDD (295 aa). Residues 1107-1253 are C-terminal hotdog fold; it reads AEPVDIAQMY…LVQLPANNDD (147 aa). S-adenosyl-L-methionine contacts are provided by Ile1420 and Glu1442. The tract at residues 1433 to 1612 is methyltransferase (CMeT) domain; the sequence is HAQTGIKILE…GLRPRLIIND (180 aa). The enoyl reductase (ER) (ER) domain stretch occupies residues 1859-1919; the sequence is PDEVKIRIHA…DQVMALRTGP (61 aa). Positions 2166–2345 are ketoreductase (KR) domain; it reads ASYLLIGGFG…PATSVSLGSV (180 aa). In terms of domain architecture, Carrier spans 2454–2531; it reads AAVEVVTRAI…QLAQQAADAS (78 aa). An O-(pantetheine 4'-phosphoryl)serine modification is found at Ser2491.

It depends on pantetheine 4'-phosphate as a cofactor.

It catalyses the reaction 4 malonyl-CoA + acetyl-CoA + 5 NADPH + 9 H(+) = 7-methylmellein + 3 CO2 + 5 NADP(+) + 5 CoA + 4 H2O. Its pathway is mycotoxin biosynthesis. In terms of biological role, highly reducing polyketide synthase; part of the gene cluster that mediates the biosynthesis of ochratoxin A (OTA), a mycotoxin composed of a chlorinated type I polyketide dihydroisocoumarin moiety linked to L-phenylalanine, and demonstrated to have nephrotoxic, immunotoxic, genotoxic, neurotoxic, and teratogenic properties. OtaA catalyzes the condensation of one acetate and 4 malonate units to form the isocoumarin group. The pathway begins with the highly reducing polyketide synthase otaA that catalyzes the formation of the isocoumarin group during the initial stages of biosynthesis, starting from one acetate and 4 malonate units, to originate the characteristic pentaketide skeleton 7-methylmellein (7-MM) of the OTA molecule. The newly identified cyclase otaY might be involved in the polyketide cyclization reaction during the initial steps of the OTA biosynthesis. 7-MM is then oxidized into 7-carboxymellein (also called ochratoxin beta) by the cytochrome P450 monooxygenase otaC. The NRPS encoded by the otaB gene is involved in the linking of phenylalanine to the dihydroisocoumarin ring. The reaction catalyzed by NRPS results in the production of ochratoxin B (OTB), which is the non-chlorinated analog of OTA and which subsequently serves as the substrate of the halogenase otaD for chlorination activity to form the final molecular structure of OTA, containing a chlorine atom in the C-5 position of the molecule. The protein is Highly reducing polyketide synthase otaA of Aspergillus niger (strain ATCC MYA-4892 / CBS 513.88 / FGSC A1513).